A 438-amino-acid chain; its full sequence is 23S rRNA (uracil(1939)-C(5))-methyltransferase RlmD (438 aa).

Positions 10–68 constitute a TRAM domain; sequence KTKNVQTITADILDLDYQGLGVAKINGKTWFIENALPHEKVECRILEDKRQYGHAIVKK. Positions 81, 87, 90, and 168 each coordinate [4Fe-4S] cluster. Gln-271, Phe-300, Asn-305, Glu-321, Asp-348, and Asp-369 together coordinate S-adenosyl-L-methionine. Residue Cys-395 is the Nucleophile of the active site.

The protein belongs to the class I-like SAM-binding methyltransferase superfamily. RNA M5U methyltransferase family. RlmD subfamily.

The enzyme catalyses uridine(1939) in 23S rRNA + S-adenosyl-L-methionine = 5-methyluridine(1939) in 23S rRNA + S-adenosyl-L-homocysteine + H(+). Functionally, catalyzes the formation of 5-methyl-uridine at position 1939 (m5U1939) in 23S rRNA. The sequence is that of 23S rRNA (uracil(1939)-C(5))-methyltransferase RlmD from Haemophilus influenzae (strain ATCC 51907 / DSM 11121 / KW20 / Rd).